The sequence spans 1254 residues: Structural polyprotein (1254 aa).

Residues 1–33 form a necessary for nucleocapsid assembly and virus assembly region; sequence MFPYQPMYPMQPMPFRNPFAAPRRPWFPRTDPF. Positions 33 to 68 are host transcription inhibition; sequence FLAMQVQELARSMANLTFKQRRDVPPEGPPAKKKKK. The short motif at 41–48 is the Supraphysiological nuclear export signal element; that stretch reads LARSMANL. The disordered stretch occupies residues 48–119; it reads LTFKQRRDVP…KPGKRQRMVM (72 aa). The Nuclear localization signal motif lies at 64-68; that stretch reads KKKKK. Composition is skewed to basic residues over residues 79 to 93 and 102 to 117; these read NGKKKNKLVKKKKKT and GGKKKVNKKPGKRQRM. Positions 91–126 are binding to the viral RNA; sequence KKTGPPPQKTNGGKKKVNKKPGKRQRMVMKLESDKT. A Phosphothreonine modification is found at Thr93. Residues 111–125 form a ribosome-binding region; the sequence is PGKRQRMVMKLESDK. Ser123 bears the Phosphoserine mark. Residues 125 to 274 enclose the Peptidase S3 domain; it reads KTFPIMLDGR…KYTPENSEQW (150 aa). Thr126 carries the post-translational modification Phosphothreonine. The active-site Charge relay system is the His151. The segment at 167–172 is interaction with spike glycoprotein E2; the sequence is KKASKY. Active-site charge relay system residues include Asp173 and Ser225. Positions 259–263 are interaction with spike glycoprotein E2; it reads EKGVT. Residues 275 to 286 are functions as an uncleaved signal peptide for the precursor of protein E3/E2; that stretch reads SLVTTMCLLANV. Residues 275-700 lie on the Extracellular side of the membrane; sequence SLVTTMCLLA…HYYHRYPMST (426 aa). Intrachain disulfides connect Cys281–Cys290, Cys352–Cys456, Cys355–Cys360, Cys423–Cys437, Cys484–Cys599, Cys533–Cys559, and Cys535–Cys553. Asn285 carries N-linked (GlcNAc...) asparagine; by host glycosylation. N-linked (GlcNAc...) asparagine; by host glycosylation is present at Asn651. The helical transmembrane segment at 701-721 threads the bilayer; sequence ILGLSICAAIVTTSIAASVWL. The Cytoplasmic segment spans residues 722-756; that stretch reads FCKSRISCLTPYRLTPNARMPLCLAVLCCARTARA. The tract at residues 724–728 is interaction with the capsid protein; the sequence is KSRIS. S-palmitoyl cysteine; by host attachment occurs at residues Cys729, Cys749, and Cys750. The tract at residues 729–749 is transient transmembrane before p62-6K protein processing; that stretch reads CLTPYRLTPNARMPLCLAVLC. Residues Cys729 and Cys750 are joined by a disulfide bond. The Extracellular segment spans residues 757–771; that stretch reads ETTWESLDHLWNHNQ. Helical transmembrane passes span 772 to 790 and 791 to 811; these read QMFWSQLLIPLAALIVATR and LLKCVCCVVPFLVVAGAVGAG. Over 812–1224 the chain is Extracellular; that stretch reads AYEHATTMPN…SKTAWTWLTS (413 aa). Cystine bridges form between Cys861–Cys926, Cys874–Cys906, Cys875–Cys908, and Cys880–Cys890. The segment at 896–913 is E1 fusion peptide loop; the sequence is VYPFMWGGAYCFCDTENT. N-linked (GlcNAc...) asparagine; by host glycans are attached at residues Asn946 and Asn1082. 4 disulfide bridges follow: Cys1071-Cys1083, Cys1113-Cys1188, Cys1118-Cys1192, and Cys1140-Cys1182. A helical membrane pass occupies residues 1225–1245; it reads LLGGSAIIIIIGLVLATIVAM. Over 1246–1254 the chain is Cytoplasmic; that stretch reads YVLTNQKHN.

Homodimer. Homomultimer. Interacts with host karyopherin KPNA4; this interaction allows the nuclear import of the viral capsid protein. Interacts with spike glycoprotein E2. Interacts with host IRAK1; the interaction leads to inhibition of IRAK1-dependent signaling. Part of a tetrameric complex composed of host CRM1, host importin alpha/beta dimer and the viral capsid; this complex blocks the receptor-mediated transport through the nuclear pore. Interacts with host phosphatase PPP1CA; this interaction dephosphorylates the capsid protein, which increases its ability to bind to the viral genome. As to quaternary structure, the precursor of protein E3/E2 and E1 form a heterodimer shortly after synthesis. In terms of assembly, interacts with spike glycoprotein E2. The precursor of protein E3/E2 and E1 form a heterodimer shortly after synthesis. Processing of the precursor of protein E3/E2 into E2 and E3 results in a heterodimer of the spike glycoproteins E2 and E1. Spike at virion surface are constituted of three E2-E1 heterodimers. After target cell attachment and endocytosis, E1 change conformation to form homotrimers. Interacts with 6K protein. Interacts with host LDLRAD3; this interaction mediates viral entry to the host cell. Interacts with spike glycoprotein E1. Processing of the precursor of protein E3/E2 into E2 and E3 results in a heterodimer of the spike glycoproteins E2 and E1. Spike at virion surface are constituted of a trimer of E2-E1 heterodimers. Interacts with 6K protein. Interacts with host LDLRAD3; this interaction mediates viral entry to the host cell. As to quaternary structure, oligomer. Interacts with spike glycoprotein E1. Interacts with spike glycoprotein E2. In terms of processing, structural polyprotein: Specific enzymatic cleavages in vivo yield mature proteins. Capsid protein is auto-cleaved during polyprotein translation, unmasking a signal peptide at the N-terminus of the precursor of E3/E2. The remaining polyprotein is then targeted to the host endoplasmic reticulum, where host signal peptidase cleaves it into pE2, 6K and E1 proteins. pE2 is further processed to mature E3 and E2 by host furin in trans-Golgi vesicle. Post-translationally, phosphorylated on serine and threonine residues. Palmitoylated via thioester bonds. These palmitoylations may induce disruption of the C-terminus transmembrane. This would result in the reorientation of E2 C-terminus from lumenal to cytoplasmic side. In terms of processing, N-glycosylated. Post-translationally, palmitoylated via thioester bonds.

It is found in the virion. Its subcellular location is the host cytoplasm. The protein localises to the host cell membrane. It localises to the host nucleus. The protein resides in the virion membrane. It is found in the host Golgi apparatus. Its subcellular location is the host trans-Golgi network. The protein localises to the host endoplasmic reticulum. The catalysed reaction is Autocatalytic release of the core protein from the N-terminus of the togavirus structural polyprotein by hydrolysis of a -Trp-|-Ser- bond.. Its function is as follows. Forms an icosahedral capsid with a T=4 symmetry composed of 240 copies of the capsid protein surrounded by a lipid membrane through which penetrate 80 spikes composed of trimers of E1-E2 heterodimers. The capsid protein binds to the viral RNA genome at a site adjacent to a ribosome binding site for viral genome translation following genome release. Possesses a protease activity that results in its autocatalytic cleavage from the nascent structural protein. Following its self-cleavage, the capsid protein transiently associates with ribosomes, and within several minutes the protein binds to viral RNA and rapidly assembles into icosahedric core particles. The resulting nucleocapsid eventually associates with the cytoplasmic domain of the spike glycoprotein E2 at the cell membrane, leading to budding and formation of mature virions. In case of infection, new virions attach to target cells and after clathrin-mediated endocytosis their membrane fuses with the host endosomal membrane. This leads to the release of the nucleocapsid into the cytoplasm, followed by an uncoating event necessary for the genomic RNA to become accessible. The uncoating might be triggered by the interaction of capsid proteins with ribosomes. Binding of ribosomes would release the genomic RNA since the same region is genomic RNA-binding and ribosome-binding. Specifically inhibits interleukin-1 receptor-associated kinase 1/IRAK1-dependent signaling during viral entry, representing a means by which the alphaviruses may evade innate immune detection and activation prior to viral gene expression. Inhibits host transcription. Forms a tetrameric complex with XPO1/CRM1 and the nuclear import receptor importin. This complex blocks the central channel of host nuclear pores thereby inhibiting the receptor-mediated nuclear transport and thus the host mRNA and rRNA transcription. The inhibition of transcription is linked to a cytopathic effect on the host cell. In terms of biological role, provides the signal sequence for the translocation of the precursor of protein E3/E2 to the host endoplasmic reticulum. Furin-cleaved E3 remains associated with spike glycoprotein E1 and mediates pH protection of the latter during the transport via the secretory pathway. After virion release from the host cell, the assembly protein E3 is gradually released in the extracellular space. Plays a role in viral attachment to target host cell, by binding to the cell receptor LDLRAD3. Synthesized as a p62 precursor which is processed by furin at the cell membrane just before virion budding, giving rise to E2-E1 heterodimer. The p62-E1 heterodimer is stable, whereas E2-E1 is unstable and dissociate at low pH. p62 is processed at the last step, presumably to avoid E1 fusion activation before its final export to cell surface. E2 C-terminus contains a transitory transmembrane that would be disrupted by palmitoylation, resulting in reorientation of the C-terminal tail from lumenal to cytoplasmic side. This step is critical since E2 C-terminus is involved in budding by interacting with capsid proteins. This release of E2 C-terminus in cytoplasm occurs lately in protein export, and precludes premature assembly of particles at the endoplasmic reticulum membrane. Functionally, acts as a viroporin that participates in virus glycoprotein processing and transport to the plasma membrane, cell permeabilization and budding of viral particles. Disrupts the calcium homeostasis of the cell, probably at the endoplasmic reticulum level. This leads to cytoplasmic calcium elevation. Because of its lipophilic properties, the 6K protein is postulated to influence the selection of lipids that interact with the transmembrane domains of the glycoproteins, which, in turn, affects the deformability of the bilayer required for the extreme curvature that occurs as budding proceeds. Present in low amount in virions, about 3% compared to viral glycoproteins. Its function is as follows. Class II viral fusion protein. Fusion activity is inactive as long as E1 is bound to E2 in mature virion. After virus attachment to cell receptor LDLRAD3 and endocytosis, acidification of the endosome induce dissociation of E1/E2 heterodimer and concomitant trimerization of the E1 subunits. This E1 trimer is fusion active, and promotes release of viral nucleocapsid in cytoplasm after endosome and viral membrane fusion. Efficient fusion requires the presence of cholesterol and sphingolipid in the target membrane. This chain is Structural polyprotein, found in Venezuelan equine encephalitis virus (strain Mena II) (VEEV).